Reading from the N-terminus, the 611-residue chain is tRNA uridine 5-carboxymethylaminomethyl modification enzyme MnmG (611 aa).

14 to 19 (GAGHAG) contacts FAD. Position 274–288 (274–288 (GPRYCPSIEDKIVKF)) interacts with NAD(+).

Belongs to the MnmG family. Homodimer. Heterotetramer of two MnmE and two MnmG subunits. FAD is required as a cofactor.

Its subcellular location is the cytoplasm. Functionally, NAD-binding protein involved in the addition of a carboxymethylaminomethyl (cmnm) group at the wobble position (U34) of certain tRNAs, forming tRNA-cmnm(5)s(2)U34. The sequence is that of tRNA uridine 5-carboxymethylaminomethyl modification enzyme MnmG from Chlamydia caviae (strain ATCC VR-813 / DSM 19441 / 03DC25 / GPIC) (Chlamydophila caviae).